We begin with the raw amino-acid sequence, 333 residues long: Succinylglutamate desuccinylase (333 aa).

Positions 56, 59, and 149 each coordinate Zn(2+). Glutamate 214 is a catalytic residue.

This sequence belongs to the AspA/AstE family. Succinylglutamate desuccinylase subfamily. Zn(2+) serves as cofactor.

The catalysed reaction is N-succinyl-L-glutamate + H2O = L-glutamate + succinate. Its pathway is amino-acid degradation; L-arginine degradation via AST pathway; L-glutamate and succinate from L-arginine: step 5/5. Functionally, transforms N(2)-succinylglutamate into succinate and glutamate. This chain is Succinylglutamate desuccinylase, found in Chromobacterium violaceum (strain ATCC 12472 / DSM 30191 / JCM 1249 / CCUG 213 / NBRC 12614 / NCIMB 9131 / NCTC 9757 / MK).